Reading from the N-terminus, the 184-residue chain is Elongation factor P (184 aa).

It belongs to the elongation factor P family.

Its subcellular location is the cytoplasm. The protein operates within protein biosynthesis; polypeptide chain elongation. Its function is as follows. Involved in peptide bond synthesis. Stimulates efficient translation and peptide-bond synthesis on native or reconstituted 70S ribosomes in vitro. Probably functions indirectly by altering the affinity of the ribosome for aminoacyl-tRNA, thus increasing their reactivity as acceptors for peptidyl transferase. This Verminephrobacter eiseniae (strain EF01-2) protein is Elongation factor P.